A 200-amino-acid polypeptide reads, in one-letter code: Putative HMP/thiamine-binding protein YkoF (200 aa).

Residues Leu17 and Thr49 each contribute to the thiamine site.

In terms of assembly, homodimer in vitro. In vivo, may be a part of an ABC transporter complex which is composed of two ATP-binding proteins (YkoD), two transmembrane proteins (YkoC and YkoE) and a solute-binding protein (YkoF).

Its function is as follows. Part of the ABC transporter complex YkoCDEF that could transport hydroxymethylpyrimidine (HMP) and/or thiamine. Could also transport other HMP-containing products. Binds thiamine via its HMP moiety. This is Putative HMP/thiamine-binding protein YkoF (ykoF) from Bacillus subtilis (strain 168).